The sequence spans 548 residues: Glutamyl-tRNA(Gln) amidotransferase subunit B, chloroplastic/mitochondrial (548 aa).

This sequence belongs to the GatB/GatE family. GatB subfamily. In terms of assembly, subunit of the heterotrimeric GatCAB amidotransferase (AdT) complex, composed of A, B and C subunits.

It localises to the mitochondrion. It is found in the plastid. The protein localises to the chloroplast. It carries out the reaction L-glutamyl-tRNA(Gln) + L-glutamine + ATP + H2O = L-glutaminyl-tRNA(Gln) + L-glutamate + ADP + phosphate + H(+). Allows the formation of correctly charged Gln-tRNA(Gln) through the transamidation of misacylated Glu-tRNA(Gln) in chloroplasts and mitochondria. The reaction takes place in the presence of glutamine and ATP through an activated gamma-phospho-Glu-tRNA(Gln). The protein is Glutamyl-tRNA(Gln) amidotransferase subunit B, chloroplastic/mitochondrial of Sorghum bicolor (Sorghum).